Here is a 178-residue protein sequence, read N- to C-terminus: PRA1 family protein 2 (178 aa).

The Cytoplasmic portion of the chain corresponds to 1 to 41 (MSEVRLPPLRALDDFVLGSARLAAPDPCDPQRWCHRVINNL). Residues 42–62 (LYYQTNYLLCFGIGLALAGYV) traverse the membrane as a helical segment. The Extracellular segment spans residues 63-64 (RP). Residues 65–85 (LHTLLSALVVAVALGMLVWAA) traverse the membrane as a helical segment. The Cytoplasmic portion of the chain corresponds to 86–96 (ETRAAVRRCRR). A helical membrane pass occupies residues 97–119 (SHPAACLAAVLAVGLLVLWVVGG). Over 120–122 (ACT) the chain is Extracellular. A helical membrane pass occupies residues 123–140 (FLLSIAGPVLLILVHASL). Residues 141 to 178 (RLRNLKNKIENKIESIGLKRTPMGLLLEALGQEQEAGS) are Cytoplasmic-facing.

Belongs to the PRA1 family. As to quaternary structure, interacts with CCR5 and GDE1.

It is found in the endosome membrane. Functionally, may be involved in ER/Golgi transport and vesicular traffic. Plays a proapoptotic role in cerulenin-induced neuroblastoma apoptosis. The sequence is that of PRA1 family protein 2 (PRAF2) from Macaca fascicularis (Crab-eating macaque).